Reading from the N-terminus, the 162-residue chain is SCF ubiquitin ligase complex protein SKP1a (162 aa).

Position 2 is an N-acetylserine (Ser-2). Residues 100-162 form an interaction with the F-box domain of F-box proteins region; that stretch reads ILAANYLDIK…NEWCEDKGGN (63 aa). At Pro-143 the chain carries 4-hydroxyproline. O-linked (GlcNAc...) hydroxyproline glycosylation occurs at Pro-143.

The protein belongs to the SKP1 family. As to quaternary structure, multiprotein complex (SCF) with cullin and F-box-containing protein. Capable of undergoing aggregation. O-linked glycan consists of linear Gal-Gal-Fuc-Gal-GlcNAc. In terms of processing, fpaA and fpaB seem to be identically glycosylated. Glycosylation is required for nuclear enrichment. Post-translationally, hydroxylated by phyA.

It localises to the cytoplasm. The protein resides in the nucleus. The sequence is that of SCF ubiquitin ligase complex protein SKP1a (fpaA) from Dictyostelium discoideum (Social amoeba).